Here is a 538-residue protein sequence, read N- to C-terminus: Mitochondrial distribution and morphology protein 34 (538 aa).

One can recognise an SMP-LTD domain in the interval 1 to 224 (MSFRFDRSVF…LPTALFNMSQ (224 aa)). Disordered regions lie at residues 26–55 (ALNPKSRRHVERADEAGNEDDSSGHQRKSG) and 231–251 (DGSRSSAKHKKDTCDENNQPS).

It belongs to the MDM34 family. In terms of assembly, component of the ER-mitochondria encounter structure (ERMES) or MDM complex, composed of MMM1, MDM10, MDM12 and MDM34.

It is found in the mitochondrion outer membrane. Component of the ERMES/MDM complex, which serves as a molecular tether to connect the endoplasmic reticulum (ER) and mitochondria. Components of this complex are involved in the control of mitochondrial shape and protein biogenesis, and function in nonvesicular lipid trafficking between the ER and mitochondria. MDM34 is required for the interaction of the ER-resident membrane protein MMM1 and the outer mitochondrial membrane-resident beta-barrel protein MDM10. This Candida glabrata (strain ATCC 2001 / BCRC 20586 / JCM 3761 / NBRC 0622 / NRRL Y-65 / CBS 138) (Yeast) protein is Mitochondrial distribution and morphology protein 34.